Reading from the N-terminus, the 498-residue chain is MRINPTTSGSGVSTLEKKNPGRVVQIIGPVLDVAFPPGKMPNIYNALVVQGRDSVGQPINVACEVQQLLGNNRVRAVAMSATEGLTRGMEVIDTGAPISVPVGGATLGRIFNVLGEPVDNLGPVDTSTTSPIHRSAPAFIQLDTKLSIFETGIKVVDLLAPYRRGGKIGLFGGAGVGKTVLIMELINNIAKAHGGVSVFGGVGERTREGNDLYMEMKESGVINEENIAESKVALVYGQMNEPPGARMRVGLTALTMAEYFRDVNEQDVLLFIDNIFRFVQAGSEVSALLGRMPSAVGYQPTLSTEMGSLQERITSTKEGSITSIQAVYVPADDLTDPAPATTFAHLDATTVLSRGLAAKGIYPAVDPLDSTSTMLQPRIVGEEHYETAQRVKQTLQRYKELQDIIAILGLDELSEEDRLLVARARKIERFLSQPFFVAEVFTGSPGKYVGLAETIRGFQLILSGELDGLPEQAFYLVGNIDEATAKAMNLEMESNLKK.

ATP is bound at residue 172 to 179 (GGAGVGKT).

Belongs to the ATPase alpha/beta chains family. As to quaternary structure, F-type ATPases have 2 components, CF(1) - the catalytic core - and CF(0) - the membrane proton channel. CF(1) has five subunits: alpha(3), beta(3), gamma(1), delta(1), epsilon(1). CF(0) has four main subunits: a(1), b(1), b'(1) and c(9-12).

The protein localises to the plastid. It localises to the chloroplast thylakoid membrane. The catalysed reaction is ATP + H2O + 4 H(+)(in) = ADP + phosphate + 5 H(+)(out). In terms of biological role, produces ATP from ADP in the presence of a proton gradient across the membrane. The catalytic sites are hosted primarily by the beta subunits. In Nicotiana sylvestris (Wood tobacco), this protein is ATP synthase subunit beta, chloroplastic.